The primary structure comprises 424 residues: CUGBP Elav-like family member 4 (424 aa).

A disordered region spans residues Val8–Asn27. Over residues Ala9–Gly24 the composition is skewed to polar residues. RRM domains lie at Ile47–Ser128 and Pro342–Pro417.

It belongs to the CELF/BRUNOL family.

The protein localises to the nucleus. It localises to the cytoplasm. RNA-binding protein that may be implicated in the regulation of pre-mRNA alternative splicing. This chain is CUGBP Elav-like family member 4 (celf4), found in Xenopus tropicalis (Western clawed frog).